We begin with the raw amino-acid sequence, 149 residues long: Arginine repressor (149 aa).

This sequence belongs to the ArgR family.

It localises to the cytoplasm. It participates in amino-acid biosynthesis; L-arginine biosynthesis [regulation]. In terms of biological role, regulates arginine biosynthesis genes. The protein is Arginine repressor of Geobacillus sp. (strain WCH70).